The chain runs to 567 residues: 2-succinyl-5-enolpyruvyl-6-hydroxy-3-cyclohexene-1-carboxylate synthase (567 aa).

The protein belongs to the TPP enzyme family. MenD subfamily. Homodimer. The cofactor is Mg(2+). Mn(2+) is required as a cofactor. Thiamine diphosphate serves as cofactor.

The enzyme catalyses isochorismate + 2-oxoglutarate + H(+) = 5-enolpyruvoyl-6-hydroxy-2-succinyl-cyclohex-3-ene-1-carboxylate + CO2. Its pathway is quinol/quinone metabolism; 1,4-dihydroxy-2-naphthoate biosynthesis; 1,4-dihydroxy-2-naphthoate from chorismate: step 2/7. The protein operates within quinol/quinone metabolism; menaquinone biosynthesis. Its function is as follows. Catalyzes the thiamine diphosphate-dependent decarboxylation of 2-oxoglutarate and the subsequent addition of the resulting succinic semialdehyde-thiamine pyrophosphate anion to isochorismate to yield 2-succinyl-5-enolpyruvyl-6-hydroxy-3-cyclohexene-1-carboxylate (SEPHCHC). The sequence is that of 2-succinyl-5-enolpyruvyl-6-hydroxy-3-cyclohexene-1-carboxylate synthase from Yersinia pestis bv. Antiqua (strain Angola).